The sequence spans 563 residues: uncharacterized protein (563 aa).

The zn(2)-C6 fungal-type DNA-binding region spans 19-45 (CLICRRRKVKCDRQQPCSRCKERNEVC). The segment at 56-78 (NVGPHPSHSENASDSETTLEVSP) is disordered. A compositionally biased stretch (polar residues) spans 64-75 (SENASDSETTLE).

The protein resides in the nucleus. This is an uncharacterized protein from Schizosaccharomyces pombe (strain 972 / ATCC 24843) (Fission yeast).